Reading from the N-terminus, the 190-residue chain is Potassium-transporting ATPase KdpC subunit (190 aa).

A helical membrane pass occupies residues 13–33 (VGFLLLTLVCGVVYPGIVTII).

It belongs to the KdpC family. As to quaternary structure, the system is composed of three essential subunits: KdpA, KdpB and KdpC.

The protein resides in the cell membrane. Part of the high-affinity ATP-driven potassium transport (or Kdp) system, which catalyzes the hydrolysis of ATP coupled with the electrogenic transport of potassium into the cytoplasm. This subunit acts as a catalytic chaperone that increases the ATP-binding affinity of the ATP-hydrolyzing subunit KdpB by the formation of a transient KdpB/KdpC/ATP ternary complex. This is Potassium-transporting ATPase KdpC subunit from Listeria welshimeri serovar 6b (strain ATCC 35897 / DSM 20650 / CCUG 15529 / CIP 8149 / NCTC 11857 / SLCC 5334 / V8).